Consider the following 160-residue polypeptide: Transcription elongation factor GreA (160 aa).

A coiled-coil region spans residues 49–73 (HAAKEEQSHNEGRIADLEDKLARAD).

This sequence belongs to the GreA/GreB family.

In terms of biological role, necessary for efficient RNA polymerase transcription elongation past template-encoded arresting sites. The arresting sites in DNA have the property of trapping a certain fraction of elongating RNA polymerases that pass through, resulting in locked ternary complexes. Cleavage of the nascent transcript by cleavage factors such as GreA or GreB allows the resumption of elongation from the new 3'terminus. GreA releases sequences of 2 to 3 nucleotides. This Rhodopseudomonas palustris (strain BisA53) protein is Transcription elongation factor GreA.